The sequence spans 80 residues: Late cornified envelope protein 6A (80 aa).

Over residues 1–10 the composition is skewed to polar residues; that stretch reads MSQQKQQSWK. Disordered regions lie at residues 1–21 and 35–60; these read MSQQKQQSWKPPNVPKCSPPQ and GAPHSEGCHSSSQRPEVQKPRRARQK.

This sequence belongs to the LCE family.

Its function is as follows. Precursors of the cornified envelope of the stratum corneum. In Homo sapiens (Human), this protein is Late cornified envelope protein 6A (LCE6A).